Reading from the N-terminus, the 342-residue chain is MDEANETAQDSVPRIDGYGFVRPAEFDYAFYEEFIARYHVVLTRRAIKWSKLLQQSAAVEKNMKVKRYIRKGIPNEHRSHVWMVVSGAQAQMDMNTGYFRRMFTEGEKNPKLLDLVITDLNRTFPDNVLFQKNANPSLQKDLYNVLVAYGQHNKTVGYCQGMNFIAGYLILVTKDEEKAFWLMDALIGQILPDYYSPAMTGLKTDQEVLGDLVKKKIPSVAQLIETHGVMWTLLVSRWFICLFIDILPVETVLRIWDCLFFEGSKVIFRVALTLIKQSQASIMEARNFPDICDKFKEITKGEFVTDCHYFMQKIFAEPGSLSKTTIDKLREKQRLKLISEEK.

A Rab-GAP TBC domain is found at 72 to 263 (GIPNEHRSHV…RIWDCLFFEG (192 aa)).

Its function is as follows. May act as a GTPase-activating protein for Rab family protein(s). This chain is Growth hormone-regulated TBC protein 1 (grtp1), found in Xenopus tropicalis (Western clawed frog).